Here is a 156-residue protein sequence, read N- to C-terminus: Ribosomal RNA large subunit methyltransferase H (156 aa).

Residues L72, G104, and 123 to 128 (LSEMTL) contribute to the S-adenosyl-L-methionine site.

Belongs to the RNA methyltransferase RlmH family. As to quaternary structure, homodimer.

It localises to the cytoplasm. The enzyme catalyses pseudouridine(1915) in 23S rRNA + S-adenosyl-L-methionine = N(3)-methylpseudouridine(1915) in 23S rRNA + S-adenosyl-L-homocysteine + H(+). Its function is as follows. Specifically methylates the pseudouridine at position 1915 (m3Psi1915) in 23S rRNA. The chain is Ribosomal RNA large subunit methyltransferase H from Syntrophotalea carbinolica (strain DSM 2380 / NBRC 103641 / GraBd1) (Pelobacter carbinolicus).